The following is a 419-amino-acid chain: UDP-N-acetylglucosamine 1-carboxyvinyltransferase (419 aa).

Residue 22-23 coordinates phosphoenolpyruvate; the sequence is KN. Arginine 91 is a UDP-N-acetyl-alpha-D-glucosamine binding site. The active-site Proton donor is the cysteine 115. Cysteine 115 carries the 2-(S-cysteinyl)pyruvic acid O-phosphothioketal modification. UDP-N-acetyl-alpha-D-glucosamine contacts are provided by residues 120–124, 160–163, aspartate 305, and isoleucine 327; these read RPVDL and KVSV.

It belongs to the EPSP synthase family. MurA subfamily.

It is found in the cytoplasm. The enzyme catalyses phosphoenolpyruvate + UDP-N-acetyl-alpha-D-glucosamine = UDP-N-acetyl-3-O-(1-carboxyvinyl)-alpha-D-glucosamine + phosphate. It participates in cell wall biogenesis; peptidoglycan biosynthesis. Cell wall formation. Adds enolpyruvyl to UDP-N-acetylglucosamine. This Citrobacter koseri (strain ATCC BAA-895 / CDC 4225-83 / SGSC4696) protein is UDP-N-acetylglucosamine 1-carboxyvinyltransferase.